We begin with the raw amino-acid sequence, 2299 residues long: Acetyl-CoA carboxylase dmxL1 (2299 aa).

Residues 21 to 39 (TSIPASVPASAPPSSSAPH) show a composition bias toward low complexity. Residues 21-41 (TSIPASVPASAPPSSSAPHAA) are disordered. The 509-residue stretch at 75 to 583 (VITNVLIANN…TTGWLDELIT (509 aa)) folds into the Biotin carboxylation domain. One can recognise an ATP-grasp 1 domain in the interval 227–424 (QVAIDADGIV…LPAAQLQIAM (198 aa)). An ATP-binding site is contributed by 258-315 (AKEIGFPVMIKASEGGGGKGIRKCEQEEGFEALYNAASSEIPGSPIFIMKLAGNARHL). Residues glutamate 381, glutamate 395, and asparagine 397 each coordinate Mg(2+). The Mn(2+) site is built by glutamate 381, glutamate 395, and asparagine 397. A Biotinyl-binding domain is found at 710-784 (LEQENDPTQL…EPGDVLGILT (75 aa)). Lysine 751 carries the post-translational modification N6-biotinyllysine. The disordered stretch occupies residues 1159 to 1208 (DMEMSSQLSTPSTPATPPTPPYENGKQSKGVGSISDMSNLIENPDKEPTR). In terms of domain architecture, CoA carboxyltransferase N-terminal spans 1539–1887 (PTKALEWLQP…KKNTLVPIGP (349 aa)). A CoA carboxyltransferase C-terminal domain is found at 1891–2205 (PWDRDIVCSP…EEHILKRIAT (315 aa)).

It depends on biotin as a cofactor. Mg(2+) is required as a cofactor. The cofactor is Mn(2+).

It catalyses the reaction hydrogencarbonate + acetyl-CoA + ATP = malonyl-CoA + ADP + phosphate + H(+). The catalysed reaction is N(6)-biotinyl-L-lysyl-[protein] + hydrogencarbonate + ATP = N(6)-carboxybiotinyl-L-lysyl-[protein] + ADP + phosphate + H(+). The protein operates within secondary metabolite biosynthesis. Its pathway is lipid metabolism; malonyl-CoA biosynthesis; malonyl-CoA from acetyl-CoA: step 1/1. Its function is as follows. Acetyl-CoA carboxylase; part of the gene cluster that mediates the biosynthesis of the dimeric xanthones cryptosporioptides. The pathway begins with the synthesis of atrochrysone thioester by the polyketide synthase dmx-nrPKS. The atrochrysone carboxyl ACP thioesterase dmxR1 then breaks the thioester bond and releases the atrochrysone carboxylic acid from dmx-nrPKS. Atrochrysone carboxylic acid is decarboxylated by the decarboxylase dmxR15, and oxidized by the anthrone oxygenase dmxR16 to yield emodin. Emodin is then reduced to emodin hydroquinone by the oxidoreductase dmxR7. A-ring reduction by the short chain dehydrogenase dmxR18, dehydration by the scytalone dehydratase-like protein dmxR17 and probable spontaneous re-oxidation, results in overall deoxygenation to chrysophanol. Baeyer-Villiger oxidation by the Baeyer-Villiger monooxygenase (BVMO) dmxR6 then yields monodictylactone in equilibrium with monodictyphenone. In the case of the cryptosporioptides biosynthesis, monodictylactone is reduced at C-12 to an alcohol (by the short chain dehydrogenases dmxR12 or dmxR8) and hydroxylated at C-5 by dmxR9, yielding the electron-rich aromatic which could eliminate H(2)O to form the ortho-quinonemethide, followed by tautomerisation to paraquinone and complete the formal reduction to produce the 10-methylgroup. Conjugate addition of C-4a-OH to the resulting paraquinone by the monooxygenase dmxR10 then gives cyclohexadienone, which is then reduced at C-5 by the short chain dehydrogenase dmxR3 to give the dihydroxanthone. The 6,7-epoxide in the cryptosporioptides could be introduced by the cytochrome P450 monooxygenase dmxL3. The highly reducing PKS dmxL2 manufactures butyrate, which is further carboxylated by dmxL1 to form ethylmalonate. It is not yet clear whether the carboxylation occurs while the butyrate is attached to the ACP of dmxL2, but this unusual fungal metabolite could then be esterified to O-5 by the O-acetyltransferase dmxR13. Finally, dimerization performed by dmxR5 gives the observed dimers cryptosporioptides A, B and C as the final products of the pathway. In Cryptosporiopsis sp. (strain 8999), this protein is Acetyl-CoA carboxylase dmxL1.